The sequence spans 527 residues: Cytokinin dehydrogenase 6 (527 aa).

A signal peptide spans 1–22 (MAARCSIAFMVMASCLSVVVSG). The 182-residue stretch at 55-236 (VAAAPEAVLH…TRARIGLEPA (182 aa)) folds into the FAD-binding PCMH-type domain. The FAD site is built by Gly91 and Gly93. His94 is subject to Pros-8alpha-FAD histidine. Residues Ser95 and Gln99 each contribute to the FAD site. Asn121 is a glycosylation site (N-linked (GlcNAc...) asparagine). Residues Asp160, Thr165, Ser171, Ile175, and Ile226 each contribute to the FAD site. 2 N-linked (GlcNAc...) asparagine glycosylation sites follow: Asn280 and Asn323. Residues Tyr475, Ser510, and Gln513 each coordinate FAD.

The protein belongs to the oxygen-dependent FAD-linked oxidoreductase family. As to quaternary structure, monomer. The cofactor is FAD.

Its subcellular location is the secreted. It is found in the extracellular space. It carries out the reaction N(6)-dimethylallyladenine + A + H2O = 3-methyl-2-butenal + adenine + AH2. Functionally, catalyzes the oxidation of cytokinins, a family of N(6)-substituted adenine derivatives that are plant hormones, where the substituent is an isopentenyl group. This Oryza sativa subsp. japonica (Rice) protein is Cytokinin dehydrogenase 6 (CKX6).